The primary structure comprises 298 residues: Probable endonuclease 4 (298 aa).

9 residues coordinate Zn(2+): His-69, His-111, Glu-146, Asp-180, His-183, His-215, Asp-228, His-230, and Glu-260.

The protein belongs to the AP endonuclease 2 family. It depends on Zn(2+) as a cofactor.

It catalyses the reaction Endonucleolytic cleavage to 5'-phosphooligonucleotide end-products.. Its function is as follows. Endonuclease IV plays a role in DNA repair. It cleaves phosphodiester bonds at apurinic or apyrimidinic (AP) sites, generating a 3'-hydroxyl group and a 5'-terminal sugar phosphate. The polypeptide is Probable endonuclease 4 (Bacillus cereus (strain B4264)).